The primary structure comprises 177 residues: Dual-action ribosomal maturation protein DarP (177 aa).

Positions Met1–Gln12 are enriched in basic and acidic residues. The tract at residues Met1–Asp26 is disordered.

This sequence belongs to the DarP family.

It is found in the cytoplasm. Member of a network of 50S ribosomal subunit biogenesis factors which assembles along the 30S-50S interface, preventing incorrect 23S rRNA structures from forming. Promotes peptidyl transferase center (PTC) maturation. The sequence is that of Dual-action ribosomal maturation protein DarP from Shewanella oneidensis (strain ATCC 700550 / JCM 31522 / CIP 106686 / LMG 19005 / NCIMB 14063 / MR-1).